A 333-amino-acid chain; its full sequence is Ornithine carbamoyltransferase (333 aa).

Residues 57–60 (STRT), Q83, R107, and 134–137 (HPTQ) contribute to the carbamoyl phosphate site. Residues N168, D232, and 236–237 (SM) contribute to the L-ornithine site. Carbamoyl phosphate contacts are provided by residues 274 to 275 (CL) and R319.

It belongs to the aspartate/ornithine carbamoyltransferase superfamily. OTCase family.

Its subcellular location is the cytoplasm. It catalyses the reaction carbamoyl phosphate + L-ornithine = L-citrulline + phosphate + H(+). The protein operates within amino-acid biosynthesis; L-arginine biosynthesis; L-arginine from L-ornithine and carbamoyl phosphate: step 1/3. Reversibly catalyzes the transfer of the carbamoyl group from carbamoyl phosphate (CP) to the N(epsilon) atom of ornithine (ORN) to produce L-citrulline. The protein is Ornithine carbamoyltransferase of Photobacterium profundum (strain SS9).